The sequence spans 122 residues: Large ribosomal subunit protein uL14 (122 aa).

The protein belongs to the universal ribosomal protein uL14 family. In terms of assembly, part of the 50S ribosomal subunit. Forms a cluster with proteins L3 and L19. In the 70S ribosome, L14 and L19 interact and together make contacts with the 16S rRNA in bridges B5 and B8.

Functionally, binds to 23S rRNA. Forms part of two intersubunit bridges in the 70S ribosome. The polypeptide is Large ribosomal subunit protein uL14 (Coxiella burnetii (strain RSA 331 / Henzerling II)).